Consider the following 265-residue polypeptide: Large ribosomal subunit protein eL8 (265 aa).

Belongs to the eukaryotic ribosomal protein eL8 family. In terms of assembly, interacts with cmd-1 in the presence of Ca(2+).

This Caenorhabditis elegans protein is Large ribosomal subunit protein eL8.